We begin with the raw amino-acid sequence, 359 residues long: MANILLLLHPTVVTDQHLVENVKADIRKSVGDAHVEQHIIDRVTRGEVELTRNTYDKIIYINPNVHNRSIPASLMKLVYETLIDEGEFSGDLPTDQALDVLMTGFIVSDTNDQCWIKPKPIESVSIPLRRKGKKTDASVSASSGTTALPLFKKLSSNSNNNNNSSSPIGLTDSSAANTDEETDEANVMKRKLDAAKLTYFSDSDSENEEDENDDIINEDDLIKDSNQLDLRSRLIIPKSCEIPNGKKRRKACKDCTCGLKEIEEQEEAQQRSLQDSILGKMAQSATLEAIKIEERLKRQPVKFKDEDLAEIDFTVEGKTGGCGSCALGDAFRCDGCPYLGMPPFKPGEIVSIDSLGEDL.

The tract at residues 1–159 (MANILLLLHP…LFKKLSSNSN (159 aa)) is N-terminal SAM-like domain. The disordered stretch occupies residues 152–187 (KKLSSNSNNNNNSSSPIGLTDSSAANTDEETDEANV). Residues 155–166 (SSNSNNNNNSSS) are compositionally biased toward low complexity. The linker stretch occupies residues 159–228 (NNNNNSSSPI…DDLIKDSNQL (70 aa)). A compositionally biased stretch (polar residues) spans 167-177 (PIGLTDSSAAN). Positions 240, 252, 255, and 257 each coordinate [2Fe-2S] cluster. Positions 240-257 (CEIPNGKKRRKACKDCTC) are fe-S binding site A. Cysteine 322, cysteine 325, cysteine 333, and cysteine 336 together coordinate [4Fe-4S] cluster. Short sequence motifs (cx2C motif) lie at residues 322–325 (CGSC) and 333–336 (CDGC). Positions 322 to 336 (CGSCALGDAFRCDGC) are fe-S binding site B.

Belongs to the anamorsin family. Monomer. Interacts with TAH18. Interacts with MIA40. The cofactor is [2Fe-2S] cluster. Requires [4Fe-4S] cluster as cofactor.

Its subcellular location is the cytoplasm. The protein localises to the mitochondrion intermembrane space. Functionally, component of the cytosolic iron-sulfur (Fe-S) protein assembly (CIA) machinery required for the maturation of extramitochondrial Fe-S proteins. Part of an electron transfer chain functioning in an early step of cytosolic Fe-S biogenesis, facilitating the de novo assembly of a [4Fe-4S] cluster on the scaffold complex CFD1-NBP35. Electrons are transferred to DRE2 from NADPH via the FAD- and FMN-containing protein TAH18. TAH18-DRE2 are also required for the assembly of the diferric tyrosyl radical cofactor of ribonucleotide reductase (RNR), probably by providing electrons for reduction during radical cofactor maturation in the catalytic small subunit RNR2. This Scheffersomyces stipitis (strain ATCC 58785 / CBS 6054 / NBRC 10063 / NRRL Y-11545) (Yeast) protein is Fe-S cluster assembly protein DRE2.